A 295-amino-acid chain; its full sequence is Acetylglutamate kinase (295 aa).

Substrate-binding positions include 66–67 (GG), R88, and N193.

The protein belongs to the acetylglutamate kinase family. ArgB subfamily.

The protein localises to the cytoplasm. The catalysed reaction is N-acetyl-L-glutamate + ATP = N-acetyl-L-glutamyl 5-phosphate + ADP. It functions in the pathway amino-acid biosynthesis; L-arginine biosynthesis; N(2)-acetyl-L-ornithine from L-glutamate: step 2/4. Its function is as follows. Catalyzes the ATP-dependent phosphorylation of N-acetyl-L-glutamate. This Bradyrhizobium diazoefficiens (strain JCM 10833 / BCRC 13528 / IAM 13628 / NBRC 14792 / USDA 110) protein is Acetylglutamate kinase.